The following is a 182-amino-acid chain: PRA1 family protein D (182 aa).

Position 2 is an N-acetylalanine (Ala2). The next 3 membrane-spanning stretches (helical) occupy residues 68 to 88 (LITRPIAILAFIAVGLAWFFL), 107 to 127 (IVAVLLIGLSIGSLVTTGVWL), and 129 to 149 (ALTTVGFGVLVLILHAALRGT). A disordered region spans residues 163–182 (PMLSTSGGGNDGARGDYSGI).

Belongs to the PRA1 family. In terms of assembly, interacts with PRA1F2 and PRA1F3. Interacts with the cauliflower mosaic virus (CaMV) movement protein (via N-terminus). As to expression, expressed in hypocotyls, roots, lateral roots, lateral root caps, columella cells, leaves, shoot apex, stems and flowers.

It localises to the endosome membrane. May be involved in both secretory and endocytic intracellular trafficking in the endosomal/prevacuolar compartments. The protein is PRA1 family protein D (PRA1D) of Arabidopsis thaliana (Mouse-ear cress).